We begin with the raw amino-acid sequence, 185 residues long: ATP synthase subunit b 1 (185 aa).

Residues 4–24 (TLAIALTLATTSPAFAAGGGW) traverse the membrane as a helical segment.

It belongs to the ATPase B chain family. F-type ATPases have 2 components, F(1) - the catalytic core - and F(0) - the membrane proton channel. F(1) has five subunits: alpha(3), beta(3), gamma(1), delta(1), epsilon(1). F(0) has three main subunits: a(1), b(2) and c(10-14). The alpha and beta chains form an alternating ring which encloses part of the gamma chain. F(1) is attached to F(0) by a central stalk formed by the gamma and epsilon chains, while a peripheral stalk is formed by the delta and b chains.

The protein localises to the cell inner membrane. Its function is as follows. F(1)F(0) ATP synthase produces ATP from ADP in the presence of a proton or sodium gradient. F-type ATPases consist of two structural domains, F(1) containing the extramembraneous catalytic core and F(0) containing the membrane proton channel, linked together by a central stalk and a peripheral stalk. During catalysis, ATP synthesis in the catalytic domain of F(1) is coupled via a rotary mechanism of the central stalk subunits to proton translocation. In terms of biological role, component of the F(0) channel, it forms part of the peripheral stalk, linking F(1) to F(0). The chain is ATP synthase subunit b 1 from Ruegeria sp. (strain TM1040) (Silicibacter sp.).